Here is a 349-residue protein sequence, read N- to C-terminus: N-acetyl-gamma-glutamyl-phosphate reductase (349 aa).

Residue cysteine 153 is part of the active site.

Belongs to the NAGSA dehydrogenase family. Type 1 subfamily.

The protein localises to the cytoplasm. The catalysed reaction is N-acetyl-L-glutamate 5-semialdehyde + phosphate + NADP(+) = N-acetyl-L-glutamyl 5-phosphate + NADPH + H(+). It functions in the pathway amino-acid biosynthesis; L-arginine biosynthesis; N(2)-acetyl-L-ornithine from L-glutamate: step 3/4. In terms of biological role, catalyzes the NADPH-dependent reduction of N-acetyl-5-glutamyl phosphate to yield N-acetyl-L-glutamate 5-semialdehyde. The protein is N-acetyl-gamma-glutamyl-phosphate reductase of Magnetococcus marinus (strain ATCC BAA-1437 / JCM 17883 / MC-1).